A 329-amino-acid chain; its full sequence is Cytosolic arginine sensor for mTORC1 subunit 1 (329 aa).

S14 carries the phosphoserine modification. ACT domains are found at residues 72-138 (AEAT…HTLA) and 260-321 (GELW…EVLQ). Residues 111–112 (SV), G274, 280–281 (IV), and 300–304 (TFNFD) each bind L-arginine.

This sequence belongs to the GATS family. In terms of assembly, forms homodimers and heterodimers with CASTOR2. Interacts with the GATOR2 complex which is composed of MIOS, SEC13, SEH1L, WDR24 and WDR59; the interaction is negatively regulated by arginine. Interacts with TM4SF5; the interaction is positively regulated by leucine and is negatively regulated by arginine. In terms of processing, phosphorylation at Ser-14 by AKT1, promoting the interaction between CASTOR1 and RNF167. Ubiquitinated by RNF167 via 'Lys-29'-polyubiquitination, leading to its degradation, releasing the GATOR2 complex. Ubiquitination by RNF167 is promoted by phosphorylation at Ser-14 by AKT1.

It localises to the cytoplasm. It is found in the cytosol. Functionally, functions as an intracellular arginine sensor within the amino acid-sensing branch of the TORC1 signaling pathway. As a homodimer or a heterodimer with CASTOR2, binds and inhibits the GATOR subcomplex GATOR2 and thereby mTORC1. Binding of arginine to CASTOR1 allosterically disrupts the interaction of CASTOR1-containing dimers with GATOR2 which can in turn activate mTORC1 and the TORC1 signaling pathway. The polypeptide is Cytosolic arginine sensor for mTORC1 subunit 1 (Bos taurus (Bovine)).